Reading from the N-terminus, the 177-residue chain is Large ribosomal subunit protein uL6 (177 aa).

The protein belongs to the universal ribosomal protein uL6 family. In terms of assembly, part of the 50S ribosomal subunit.

In terms of biological role, this protein binds to the 23S rRNA, and is important in its secondary structure. It is located near the subunit interface in the base of the L7/L12 stalk, and near the tRNA binding site of the peptidyltransferase center. This is Large ribosomal subunit protein uL6 from Hydrogenovibrio crunogenus (strain DSM 25203 / XCL-2) (Thiomicrospira crunogena).